A 747-amino-acid chain; its full sequence is Catalase-peroxidase (747 aa).

The N-terminal stretch at 1–27 (MRKFSVSKVALLAATMAPALLPAAARA) is a signal peptide. The segment at residues 116–238 (WHSAGTYRTA…LAAVQMGLIY (123 aa)) is a cross-link (tryptophyl-tyrosyl-methioninium (Trp-Tyr) (with M-264)). Residue His117 is the Proton acceptor of the active site. The tryptophyl-tyrosyl-methioninium (Tyr-Met) (with W-116) cross-link spans 238-264 (YVNPEGPNGNPDPLLAAKDIRETFGRM). A heme b-binding site is contributed by His279.

This sequence belongs to the peroxidase family. Peroxidase/catalase subfamily. Homodimer or homotetramer. Heme b is required as a cofactor. Formation of the three residue Trp-Tyr-Met cross-link is important for the catalase, but not the peroxidase activity of the enzyme.

It catalyses the reaction H2O2 + AH2 = A + 2 H2O. The enzyme catalyses 2 H2O2 = O2 + 2 H2O. Bifunctional enzyme with both catalase and broad-spectrum peroxidase activity. The protein is Catalase-peroxidase of Novosphingobium aromaticivorans (strain ATCC 700278 / DSM 12444 / CCUG 56034 / CIP 105152 / NBRC 16084 / F199).